Reading from the N-terminus, the 231-residue chain is 5'-methylthioadenosine/S-adenosylhomocysteine nucleosidase (231 aa).

E12 (proton acceptor) is an active-site residue. Residues G78, M153, and 174–175 (ME) each bind substrate. Residue D198 is the Proton donor of the active site.

This sequence belongs to the PNP/UDP phosphorylase family. MtnN subfamily.

The enzyme catalyses S-adenosyl-L-homocysteine + H2O = S-(5-deoxy-D-ribos-5-yl)-L-homocysteine + adenine. It carries out the reaction S-methyl-5'-thioadenosine + H2O = 5-(methylsulfanyl)-D-ribose + adenine. The catalysed reaction is 5'-deoxyadenosine + H2O = 5-deoxy-D-ribose + adenine. It participates in amino-acid biosynthesis; L-methionine biosynthesis via salvage pathway; S-methyl-5-thio-alpha-D-ribose 1-phosphate from S-methyl-5'-thioadenosine (hydrolase route): step 1/2. Its function is as follows. Catalyzes the irreversible cleavage of the glycosidic bond in both 5'-methylthioadenosine (MTA) and S-adenosylhomocysteine (SAH/AdoHcy) to adenine and the corresponding thioribose, 5'-methylthioribose and S-ribosylhomocysteine, respectively. Also cleaves 5'-deoxyadenosine, a toxic by-product of radical S-adenosylmethionine (SAM) enzymes, into 5-deoxyribose and adenine. This is 5'-methylthioadenosine/S-adenosylhomocysteine nucleosidase from Bacillus subtilis (strain 168).